The following is a 111-amino-acid chain: MPANARSNAVLTTESKVTIRGQTTIPAPVREALKLKPGLDSIHYEILPGGQVFMCRLGDEQEDHTMNAFLRFLDADIQNNPQKTRPFDIQQGKKLVAGMDVNIDDEIGDDE.

The 48-residue stretch at 12 to 59 (TTESKVTIRGQTTIPAPVREALKLKPGLDSIHYEILPGGQVFMCRLGD) folds into the SpoVT-AbrB domain.

As to quaternary structure, homodimer; forms a complex with YhaV with stoichiometry PrlF(2)-YhaV(4), possibly as a YhaV(2)-PrlF(2)-YhaV(2) complex like the MazFE complex.

The protein localises to the cytoplasm. Functionally, antitoxin component of a type II toxin-antitoxin (TA) system. Labile antitoxin that binds to the YhaV toxin and neutralizes its ribonuclease activity. Also acts as a transcription factor. The YhaV/PrlF complex binds the prlF-yhaV operon, probably negatively regulating its expression. This is Antitoxin PrlF (prlF) from Escherichia coli O6:H1 (strain CFT073 / ATCC 700928 / UPEC).